A 298-amino-acid chain; its full sequence is uncharacterized protein (298 aa).

Residues 5 to 62 (TSLSAMRIFEAAARLGSFRAAAEELNLSPSAVSHAIMRLERDLGVALFERTTRSVSLT) form the HTH lysR-type domain. A DNA-binding region (H-T-H motif) is located at residues 22-42 (FRAAAEELNLSPSAVSHAIMR).

Belongs to the LysR transcriptional regulatory family.

This is an uncharacterized protein from Sinorhizobium fredii (strain NBRC 101917 / NGR234).